A 417-amino-acid polypeptide reads, in one-letter code: Oxidoreductase phnG (417 aa).

Residues 16–20 (GGSYA), R61, and D317 each bind 6-hydroxy-FAD.

The protein belongs to the FAD-dependent oxidoreductase family. 6-hydroxy-FAD is required as a cofactor.

It catalyses the reaction deoxyherqueinone + NADPH + O2 + H(+) = herqueinone + NADP(+) + H2O. The protein operates within secondary metabolite biosynthesis. Oxidoreductase; part of the gene cluster that mediates the biosynthesis of phenalenones such as herqueinone, compounds that have been reported to treat tumors, bacterial infections and/or mycoses, and rheumatic diseases. The non-reducing polyketide synthase phnA synthesizes the heptaketide backbone and cyclizes it into the angular, hemiketal-containing naphtho-gamma-pyrone prephenalenone. The product template (PT) domain of phnA catalyzes only the C4-C9 aldol condensation, which is unprecedented among known PT domains. The transformation of prephenalenone to phenalenones requires an FAD-dependent monooxygenase phnB, which catalyzes the C2 aromatic hydroxylation of prephenalenone and ring opening of the gamma-pyrone ring simultaneously. Subsequent intramolecular deprotonation of C3 phenolic oxygen accelerates phenalenone ring closure to yield the tricyclic phenalenone core with a C2 hydroxylation. The prenyltransferase phnF further catalyzes reverse C-prenylation of phenalenone by direct electrophilic substitution at C6, or possibly via first a forward O-prenylation of a neighboring phenol in phenalenone, followed by a Claisen rearrangement. The hydroalkoxylation enzyme phnH catalyzes the 5-exo-trig cyclization via acid catalysis after the spontaneous deprotonation of 7-OH, which leads to the formation of the dihydrobenzofuran atrovenetin. Atrovenetin is further converted to deoxyherqueinone by the O-methyltransferase phnC which can methylate C2-OH to stabilize the northern portion of the phenalenone core. Finally, the oxidoreductase phnG converts deoxyherqueinone to herqueinone via C6 hydroxylation. The protein is Oxidoreductase phnG of Penicillium herquei.